The chain runs to 178 residues: TM2 domain-containing protein biscotti (178 aa).

Residues 1-18 (MFPVLLLLLFFFAKETHQ) form the signal peptide. The Extracellular portion of the chain corresponds to 19 to 99 (INVDCNELQM…YHLDTTLLLS (81 aa)). Residues Asn-69 and Asn-75 are each glycosylated (N-linked (GlcNAc...) asparagine). The region spanning 94-137 (TTLLLSVFLGMFGVDRFYLGYPGIGLLKFCTLGGMFLGQLIDIV) is the TM2 domain. A helical transmembrane segment spans residues 100–120 (VFLGMFGVDRFYLGYPGIGLL). The Cytoplasmic portion of the chain corresponds to 121–124 (KFCT). The chain crosses the membrane as a helical span at residues 125–145 (LGGMFLGQLIDIVLIALQVVG). Residues 146 to 178 (PADGSAYVIPYYGAGIHIVRSDNTTYRLPRDDW) are Extracellular-facing. N-linked (GlcNAc...) asparagine glycosylation occurs at Asn-168.

It belongs to the TM2 family.

The protein localises to the membrane. In terms of biological role, positive regulator of Notch signaling. Maternal neurogenic factor involved in Notch signaling-dependent neuroectodermal specification during early embryogenesis. Functions cooperatively with amx/TM2D3 and amrt/TM2D2. This is TM2 domain-containing protein biscotti from Drosophila melanogaster (Fruit fly).